Reading from the N-terminus, the 479-residue chain is MDATTAPHRIPPEMPQYGEDYYIFEMMQNMLEQLLIHQPEDPISFMITHLRRNNDNVPKVVILGPPASGKTTIAMWLCKHLNSNLITKESLLEREFSRLSVEAKSYYQVYKKIPNSILVSLVQERLNEDDCLRKGWILDGIPERREQALMIQTLGLAPKHVIVLNAPDTVLIERNVGKRIDPVTGEIYHTTFDWPPEPEIQNRLRQPEGISEIETAKKLLEYHRHIIRILPSYPKILKTISSDQPCVDVFYQALTYVQSGHRCNAPFTPKVLLCGPLGSGKRLQATLLAQKYGLVNISCGQLLKEAVAAKSSFGELIQPFFEKRMTVPDSIITKVLADRMEQQDCIQKGWVLHGFPRDLDQARMLNSMGYNPNRVFFLSVPLDSILERLTLRRTDPVTGERFHLMYKPPPTIEVQVRLLQNPKDSEEYIKLQTDLFYRNSGDLEQYYDRAIIVNGDQDPYTVFEYIESGIINPLPRKVT.

Adenylate kinase regions lie at residues 58-258 (PKVV…TYVQ) and 269-471 (PKVL…SGII). 67–72 (ASGKTT) contributes to the ATP binding site. The NMP 1 stretch occupies residues 87–113 (TKESLLEREFSRLSVEAKSYYQVYKKI). AMP is bound by residues 140 to 143 (GIPE), Gln147, and Arg203. The segment at 177 to 206 (GKRIDPVTGEIYHTTFDWPPEPEIQNRLRQ) is LID 1. ATP is bound at residue 278 to 283 (GSGKRL). The segment at 298 to 327 (SCGQLLKEAVAAKSSFGELIQPFFEKRMTV) is NMP 2. AMP-binding positions include 325 to 327 (MTV), 354 to 357 (GFPR), and Gln361. The interval 391-424 (LRRTDPVTGERFHLMYKPPPTIEVQVRLLQNPKD) is LID 2. Arg392 is an ATP binding site.

The protein belongs to the adenylate kinase family. Interacts with CFAP45 and CFAP52; CFAP45 and AK8 dimerization may create a cavity at the interface of the dimer that can accommodate AMP.

The protein resides in the cytoplasm. It localises to the cytosol. Its subcellular location is the cytoskeleton. The protein localises to the cilium axoneme. It catalyses the reaction AMP + ATP = 2 ADP. It carries out the reaction a 2'-deoxyribonucleoside 5'-diphosphate + ATP = a 2'-deoxyribonucleoside 5'-triphosphate + ADP. The catalysed reaction is a ribonucleoside 5'-diphosphate + ATP = a ribonucleoside 5'-triphosphate + ADP. In terms of biological role, nucleoside monophosphate (NMP) kinase that catalyzes the reversible transfer of the terminal phosphate group between nucleoside triphosphates and monophosphates. Has highest activity toward AMP, and weaker activity toward dAMP, CMP and dCMP. Also displays broad nucleoside diphosphate kinase activity. In Mus musculus (Mouse), this protein is Adenylate kinase 8 (Ak8).